The primary structure comprises 129 residues: DNA-directed RNA polymerase III subunit rpc9 (129 aa).

The protein belongs to the eukaryotic RPC9 RNA polymerase subunit family. As to quaternary structure, component of the RNA polymerase III (Pol III) complex.

It localises to the cytoplasm. The protein resides in the nucleus. DNA-dependent RNA polymerase catalyzes the transcription of DNA into RNA using the four ribonucleoside triphosphates as substrates. Specific peripheric component of RNA polymerase III which synthesizes small RNAs, such as 5S rRNA and tRNAs. The sequence is that of DNA-directed RNA polymerase III subunit rpc9 (rpc17) from Schizosaccharomyces pombe (strain 972 / ATCC 24843) (Fission yeast).